A 1488-amino-acid chain; its full sequence is Phenolphthiocerol/phthiocerol polyketide synthase subunit E (1488 aa).

One can recognise a Ketosynthase family 3 (KS3) domain in the interval 5 to 438 (ENAIAVVGMA…GTNAHVVLEE (434 aa)). Residues Cys-184, His-320, and His-361 each act as for beta-ketoacyl synthase activity in the active site. Residues 551 to 868 (VFLFPGQGAQ…GELWSAGVEV (318 aa)) are acyltransferase. Ser-641 functions as the For malonyltransferase activity in the catalytic mechanism. The Carrier domain maps to 930–1004 (NGESQTEVTL…SLTAAVDASF (75 aa)). Ser-965 carries the O-(pantetheine 4'-phosphoryl)serine modification. Residue 1286–1331 (EGVVAVELEGEGRSVLRPDVDLRRTVGWFTTYYPVPLACATGLGAL) coordinates NADP(+).

It depends on NADP(+) as a cofactor. Pantetheine 4'-phosphate serves as cofactor.

It catalyses the reaction icosanoyl-[(phenol)carboxyphthiodiolenone synthase] + 2 (S)-methylmalonyl-CoA + 3 malonyl-CoA + 5 NADPH + 10 H(+) = C32-carboxyphthiodiolenone-[(phenol)carboxyphthiodiolenone synthase] + 5 CO2 + 5 NADP(+) + 5 CoA + 2 H2O. The catalysed reaction is docosanoyl-[(phenol)carboxyphthiodiolenone synthase] + 2 (S)-methylmalonyl-CoA + 3 malonyl-CoA + 5 NADPH + 10 H(+) = C34-carboxyphthiodiolenone-[(phenol)carboxyphthiodiolenone synthase] + 5 CO2 + 5 NADP(+) + 5 CoA + 2 H2O. The enzyme catalyses 17-(4-hydroxyphenyl)heptadecanoyl-[(phenol)carboxyphthiodiolenone synthase] + 2 (S)-methylmalonyl-CoA + 3 malonyl-CoA + 5 NADPH + 10 H(+) = C35-(phenol)carboxyphthiodiolenone-[(phenol)carboxyphthiodiolenone synthase] + 5 CO2 + 5 NADP(+) + 5 CoA + 2 H2O. It carries out the reaction 19-(4-hydroxyphenyl)nonadecanoyl-[(phenol)carboxyphthiodiolenone synthase] + 2 (S)-methylmalonyl-CoA + 3 malonyl-CoA + 5 NADPH + 10 H(+) = C37-(phenol)carboxyphthiodiolenone-[(phenol)carboxyphthiodiolenone synthase] + 5 CO2 + 5 NADP(+) + 5 CoA + 2 H2O. Its pathway is lipid metabolism; fatty acid biosynthesis. Part of the PpsABCDE complex involved in the biosynthesis of the lipid core common to phthiocerols and phenolphthiocerols by successive additions of malonyl-CoA or methylmalonyl-CoA extender units. PpsA can accept as substrate the activated forms of either icosanoyl (C20), docosanoyl (C22) or lignoceroyl (C24) groups from FadD26, or a (4-hydroxyphenyl)-C17 or (4-hydroxyphenyl)-C19 fatty acyl from FadD29. PpsA initiates the biosynthesis and extends its substrate using a malonyl-CoA extender unit. The PpsB and PpsC proteins add the second and third malonyl-CoA extender units. PpsD adds an (R)-methylmalonyl unit and PpsE adds a second (R)-methylmalonyl unit. The incorporation of the methylmalonyl units results in formation of two branched methyl groups in the elongated product. This is Phenolphthiocerol/phthiocerol polyketide synthase subunit E (ppsE) from Mycobacterium tuberculosis (strain CDC 1551 / Oshkosh).